The sequence spans 570 residues: Hydroxylamine reductase (570 aa).

Cysteine 5, cysteine 8, cysteine 17, and cysteine 23 together coordinate [4Fe-4S] cluster. 8 residues coordinate hybrid [4Fe-2O-2S] cluster: histidine 266, glutamate 290, cysteine 334, cysteine 425, cysteine 453, cysteine 478, glutamate 513, and lysine 515. Cysteine 425 bears the Cysteine persulfide mark.

Belongs to the HCP family. It depends on [4Fe-4S] cluster as a cofactor. Hybrid [4Fe-2O-2S] cluster serves as cofactor.

The protein resides in the cytoplasm. It catalyses the reaction A + NH4(+) + H2O = hydroxylamine + AH2 + H(+). In terms of biological role, catalyzes the reduction of hydroxylamine to form NH(3) and H(2)O. This Clostridium botulinum (strain Langeland / NCTC 10281 / Type F) protein is Hydroxylamine reductase.